Consider the following 257-residue polypeptide: Ribonuclease HII (257 aa).

The 188-residue stretch at 70–257 (EFIAGIDEVG…PIKSMVAGGN (188 aa)) folds into the RNase H type-2 domain. Positions 76, 77, and 168 each coordinate a divalent metal cation.

Belongs to the RNase HII family. Requires Mn(2+) as cofactor. It depends on Mg(2+) as a cofactor.

It is found in the cytoplasm. It carries out the reaction Endonucleolytic cleavage to 5'-phosphomonoester.. Its function is as follows. Endonuclease that specifically degrades the RNA of RNA-DNA hybrids. The chain is Ribonuclease HII from Streptococcus suis (strain 98HAH33).